Here is a 179-residue protein sequence, read N- to C-terminus: Endoribonuclease YbeY (179 aa).

Zn(2+)-binding residues include H148, H152, and H158.

This sequence belongs to the endoribonuclease YbeY family. Zn(2+) is required as a cofactor.

Its subcellular location is the cytoplasm. Its function is as follows. Single strand-specific metallo-endoribonuclease involved in late-stage 70S ribosome quality control and in maturation of the 3' terminus of the 16S rRNA. The polypeptide is Endoribonuclease YbeY (Prochlorococcus marinus (strain AS9601)).